A 205-amino-acid chain; its full sequence is RNA pyrophosphohydrolase (205 aa).

Residues 6-149 (GFRPNVGIVL…KRGVYARALR (144 aa)) enclose the Nudix hydrolase domain. Residues 38 to 59 (GGMNTDETPVEAMYRELREETG) carry the Nudix box motif. A disordered region spans residues 178–205 (GSSAAGHDRPRKRPRKRGGVLPVRINND). The segment covering 186–195 (RPRKRPRKRG) has biased composition (basic residues).

This sequence belongs to the Nudix hydrolase family. RppH subfamily. Requires a divalent metal cation as cofactor.

Functionally, accelerates the degradation of transcripts by removing pyrophosphate from the 5'-end of triphosphorylated RNA, leading to a more labile monophosphorylated state that can stimulate subsequent ribonuclease cleavage. In Xanthomonas campestris pv. campestris (strain 8004), this protein is RNA pyrophosphohydrolase.